A 572-amino-acid chain; its full sequence is Phosphoenolpyruvate-protein phosphotransferase (572 aa).

The active-site Tele-phosphohistidine intermediate is His-191. Arg-298 and Arg-334 together coordinate phosphoenolpyruvate. Residues Glu-433 and Asp-457 each coordinate Mg(2+). Residues Asn-456–Asp-457 and Arg-467 each bind phosphoenolpyruvate. The Proton donor role is filled by Cys-504.

It belongs to the PEP-utilizing enzyme family. As to quaternary structure, homodimer. Mg(2+) is required as a cofactor.

The protein localises to the cytoplasm. The enzyme catalyses L-histidyl-[protein] + phosphoenolpyruvate = N(pros)-phospho-L-histidyl-[protein] + pyruvate. General (non sugar-specific) component of the phosphoenolpyruvate-dependent sugar phosphotransferase system (sugar PTS). This major carbohydrate active-transport system catalyzes the phosphorylation of incoming sugar substrates concomitantly with their translocation across the cell membrane. Enzyme I transfers the phosphoryl group from phosphoenolpyruvate (PEP) to the phosphoryl carrier protein (HPr). The protein is Phosphoenolpyruvate-protein phosphotransferase (ptsI) of Staphylococcus aureus (strain COL).